Consider the following 470-residue polypeptide: Trigger factor (470 aa).

In terms of domain architecture, PPIase FKBP-type spans 164–243 (GDYVVIDMTA…VTAVKVQELP (80 aa)). Acidic residues-rich tracts occupy residues 424 to 438 (ETDAEDAAEGVESVE) and 445 to 470 (AEDDAEETSDEPAAEDTATEDEAAKA). The interval 424–470 (ETDAEDAAEGVESVEVDLSAAAEDDAEETSDEPAAEDTATEDEAAKA) is disordered.

It belongs to the FKBP-type PPIase family. Tig subfamily.

It is found in the cytoplasm. The catalysed reaction is [protein]-peptidylproline (omega=180) = [protein]-peptidylproline (omega=0). Its function is as follows. Involved in protein export. Acts as a chaperone by maintaining the newly synthesized protein in an open conformation. Functions as a peptidyl-prolyl cis-trans isomerase. In Beutenbergia cavernae (strain ATCC BAA-8 / DSM 12333 / CCUG 43141 / JCM 11478 / NBRC 16432 / NCIMB 13614 / HKI 0122), this protein is Trigger factor.